The following is a 508-amino-acid chain: Photosystem II CP47 reaction center protein (508 aa).

6 consecutive transmembrane segments (helical) span residues 21 to 36, 101 to 115, 140 to 156, 203 to 218, 237 to 252, and 457 to 472; these read AVHIMHTALVSGWAGS, IVFSGLCFLAAIWHW, GIHLFLAGVACFGFGAF, IAAGTLGILAGLFHLS, VLSSSIAAVFFAAFVV, and TFALLFFFGHIWHGAR.

This sequence belongs to the PsbB/PsbC family. PsbB subfamily. In terms of assembly, PSII is composed of 1 copy each of membrane proteins PsbA, PsbB, PsbC, PsbD, PsbE, PsbF, PsbH, PsbI, PsbJ, PsbK, PsbL, PsbM, PsbT, PsbX, PsbY, PsbZ, Psb30/Ycf12, at least 3 peripheral proteins of the oxygen-evolving complex and a large number of cofactors. It forms dimeric complexes. The cofactor is Binds multiple chlorophylls. PSII binds additional chlorophylls, carotenoids and specific lipids..

It is found in the plastid. The protein resides in the chloroplast thylakoid membrane. In terms of biological role, one of the components of the core complex of photosystem II (PSII). It binds chlorophyll and helps catalyze the primary light-induced photochemical processes of PSII. PSII is a light-driven water:plastoquinone oxidoreductase, using light energy to abstract electrons from H(2)O, generating O(2) and a proton gradient subsequently used for ATP formation. The sequence is that of Photosystem II CP47 reaction center protein from Hordeum vulgare (Barley).